The following is a 190-amino-acid chain: Female-specific histamine-binding protein 1 (190 aa).

Residues 1–18 form the signal peptide; that stretch reads MKLLLSLAFVLALSQVKA. Tyrosine 54, aspartate 57, tryptophan 60, glutamate 100, tyrosine 118, glutamate 153, and tryptophan 155 together coordinate histamine. Intrachain disulfides connect cysteine 66/cysteine 187 and cysteine 137/cysteine 166.

The protein belongs to the calycin superfamily. Histamine-binding salivary protein family. In terms of assembly, monomer. Expressed in salivary glands.

The protein resides in the secreted. Its function is as follows. Salivary tick protein that acts by scavenging histamine at the wound site, outcompeting histamine receptors for histamine, thereby overcoming host inflammatory responses. Binds histamine with a high-affinity (Kd=18 nM). Contains two binding histamine sites (H and L), that appear to bind histamine with differing affinities (high and low). In vivo, when tested on a mouse asthma model, shows a profound inhibitory effect on allergic asthma. Aerosol administration of this protein prevents airway hyperreactivity and abrogates peribronchial inflammation, eosinophil recruitment, mucus hypersecretion, and interleukins (IL-4 and IL-5) secretion. In addition, when tested on a mouse model of acute respiratory distress syndrome (ARDS), it attenuates endotoxin-induced acute lung injury. In Rhipicephalus appendiculatus (Brown ear tick), this protein is Female-specific histamine-binding protein 1.